A 184-amino-acid polypeptide reads, in one-letter code: Putative DNA-directed RNA polymerase subunit 454R (184 aa).

The protein belongs to the archaeal Rpo5/eukaryotic RPB5 RNA polymerase subunit family.

Functionally, component of the DNA-dependent RNA polymerase that catalyzes the transcription in the cytoplasm of viral DNA into RNA using the four ribonucleoside triphosphates as substrates. This chain is Putative DNA-directed RNA polymerase subunit 454R, found in Invertebrate iridescent virus 6 (IIV-6).